A 397-amino-acid chain; its full sequence is Protein PEP-RELATED DEVELOPMENT ARRESTED 1, chloroplastic (397 aa).

The transit peptide at 1 to 52 directs the protein to the chloroplast; sequence MLQSIHLRFSSTPSPSKRESLIIPSVICSFPFTSSSFRPKQTQKLKRLVQFC. Over residues 315 to 334 the composition is skewed to basic and acidic residues; that stretch reads KDEGADNLSKEDDSSTEGRK. A disordered region spans residues 315–351; sequence KDEGADNLSKEDDSSTEGRKPSGLNGRGSVTGRKPLP.

Interacts with FSD2 and MRL7. As to expression, highly expressed in young leaves, shoots and flowers. Expressed at low levels in stems and siliques.

The protein resides in the plastid. It is found in the chloroplast stroma. The protein localises to the chloroplast nucleoid. Plays an essential role in early steps of chloroplast development. May be involved in the redox control of plastid gene expression by maintening the redox state around chloroplast nucleoids. May positively regulate plastid-encoded RNA polymerase (PEP) activity, through binding to FSD2. This Arabidopsis thaliana (Mouse-ear cress) protein is Protein PEP-RELATED DEVELOPMENT ARRESTED 1, chloroplastic (PRDA1).